Here is a 58-residue protein sequence, read N- to C-terminus: MSEIKVGKNESLDSALRRFKRTCQRAGVLSEARKHEHYEKPSVKRKKKSEAARKRKFK.

Residues 27–58 (GVLSEARKHEHYEKPSVKRKKKSEAARKRKFK) form a disordered region. The segment covering 31–42 (EARKHEHYEKPS) has biased composition (basic and acidic residues). The span at 43–58 (VKRKKKSEAARKRKFK) shows a compositional bias: basic residues.

This sequence belongs to the bacterial ribosomal protein bS21 family.

The chain is Small ribosomal subunit protein bS21 from Desulfitobacterium hafniense (strain DSM 10664 / DCB-2).